The primary structure comprises 381 residues: Layilin (381 aa).

Positions 1-24 are cleaved as a signal peptide; that stretch reads MQPGAALQAMLLAVLLAKPRDSKG. Residues 25-235 lie on the Extracellular side of the membrane; the sequence is RLLSASDLDP…ERREAALNLA (211 aa). One can recognise a C-type lectin domain in the interval 45–185; sequence TRRPCYKVIY…CNMKNNFICK (141 aa). 2 disulfides stabilise this stretch: Cys-71–Cys-184 and Cys-150–Cys-176. An N-linked (GlcNAc...) asparagine glycan is attached at Asn-117. A helical membrane pass occupies residues 236-256; sequence YILIPSIPLFLLLVVTSAVCW. Residues 257 to 381 lie on the Cytoplasmic side of the membrane; that stretch reads VWICRRKREQ…SGWVENEIYY (125 aa). 2 positions are modified to phosphoserine: Ser-286 and Ser-299. The segment at 330-374 is interaction with NF2; it reads DYENIAVNPSESGFVTLASMESGFVTNDIYEFSPDRMGRSKESGW. The interval 337 to 381 is interaction with TLN1; sequence NPSESGFVTLASMESGFVTNDIYEFSPDRMGRSKESGWVENEIYY. 5 repeat units span residues 340–344, 350–354, 356–359, 371–375, and 377–380. The tract at residues 340 to 375 is 3 X 5 AA repeats of E-S-G-X-V; sequence ESGFVTLASMESGFVTNDIYEFSPDRMGRSKESGWV. The 2 X 4 AA repeats of N-X-I-Y stretch occupies residues 356-380; that stretch reads NDIYEFSPDRMGRSKESGWVENEIY.

As to quaternary structure, interacts with TLN1. Interacts with NF2 and RDX.

The protein resides in the membrane. In terms of biological role, receptor for hyaluronate. In Mus musculus (Mouse), this protein is Layilin (Layn).